A 282-amino-acid chain; its full sequence is tRNA uridine(34) hydroxylase (282 aa).

Residues 128–222 enclose the Rhodanese domain; the sequence is EGRPVVMLDT…YFEEVGGDHY (95 aa). The Cysteine persulfide intermediate role is filled by C182.

This sequence belongs to the TrhO family.

The enzyme catalyses uridine(34) in tRNA + AH2 + O2 = 5-hydroxyuridine(34) in tRNA + A + H2O. Its function is as follows. Catalyzes oxygen-dependent 5-hydroxyuridine (ho5U) modification at position 34 in tRNAs. The sequence is that of tRNA uridine(34) hydroxylase from Cupriavidus pinatubonensis (strain JMP 134 / LMG 1197) (Cupriavidus necator (strain JMP 134)).